The sequence spans 225 residues: NAD(P)H-hydrate epimerase (225 aa).

Positions 9 to 209 (MQTIDNYTVE…DIGLLTPQDF (201 aa)) constitute a YjeF N-terminal domain. Position 57–61 (57–61 (NNGAD)) interacts with (6S)-NADPHX. 2 residues coordinate K(+): Asn-58 and Asp-119. Residues 123–129 (GTGLNNL) and Asp-152 each bind (6S)-NADPHX. A K(+)-binding site is contributed by Thr-155.

Belongs to the NnrE/AIBP family. K(+) is required as a cofactor.

The enzyme catalyses (6R)-NADHX = (6S)-NADHX. It carries out the reaction (6R)-NADPHX = (6S)-NADPHX. Catalyzes the epimerization of the S- and R-forms of NAD(P)HX, a damaged form of NAD(P)H that is a result of enzymatic or heat-dependent hydration. This is a prerequisite for the S-specific NAD(P)H-hydrate dehydratase to allow the repair of both epimers of NAD(P)HX. The sequence is that of NAD(P)H-hydrate epimerase from Leuconostoc sp. (strain C2).